Consider the following 560-residue polypeptide: MNNNIINLIAAIVLSLSIIFGWQYFVIKPEQKKQQQQIAVQKAANLKKQQLKALVEPATDIVVQEESQVQRIKIESESLTGSISLKGLRFDDLILKKYKQDLSKNSSDVVLFSPTNTEHSYFAEIGLVSNLSSVKLPNNDTIWSSDGEILSPEKPVNLFWVNEDGVKFLVTITVDKNYLFTIEQTIVNNSDKELPIQSYGLINRKYTAVEKAVNILHQGPIGCIDENLKEYSYDDIKDKKSEKFAASKVDWIGITDKYWLSALIPDKSSNYSSNFNYAVKQGIEKYQVDFISPVQIIKPGENFAIKSRIFAGAKKVDLLDQYEKQYDIKLFDRAIDFGWFYIITKPVFYAMNFFYGYVGNFGVSILIVTVIIKLLMFTLANKSYRSMKKIKNLQPEIDRIKNLYSDDKARLNQEIMALYKKEKVNPVAGCLPILVQIPVFFSIYKVLYVTIEMRQAQFYGWIKDLSAPDPTTIFNLFGLLPFSPPSFLMIGAWPILMAITMFLQQKMSPEPADPMQAQVMKFMPLIFLFMFSSFPVGLLIYWSWNNILSIIQQYYINKFN.

Helical transmembrane passes span 5–25, 334–354, 357–377, 431–451, 476–496, and 522–542; these read IINL…WQYF, AIDF…MNFF, YVGN…LLMF, LPIL…YVTI, LFGL…WPIL, and FMPL…LIYW.

This sequence belongs to the OXA1/ALB3/YidC family. Type 1 subfamily. Interacts with the Sec translocase complex via SecD. Specifically interacts with transmembrane segments of nascent integral membrane proteins during membrane integration.

It localises to the cell inner membrane. Its function is as follows. Required for the insertion and/or proper folding and/or complex formation of integral membrane proteins into the membrane. Involved in integration of membrane proteins that insert both dependently and independently of the Sec translocase complex, as well as at least some lipoproteins. Aids folding of multispanning membrane proteins. The protein is Membrane protein insertase YidC of Rickettsia akari (strain Hartford).